We begin with the raw amino-acid sequence, 343 residues long: MLQTDNLTAAQPQRIVAAQTASAQEELLERALRPKTLDDYIGQDKAKEQLAIFIQAAKKRGEALDHVLLFGPPGLGKTTLAHIIAKELGVNLRQTSGPVLERAGDLAALLTNLDPHDVLFIDEIHRLSPVVEEILYPALEDYRLDIMIGEGPAARSVKIDLPPFTLIGATTRAGMLTNPLRDRFGIVSRLEFYENRDLTTIVSRSAQLLQLDMSEEGAEEIAKRSRGTPRIANRLLRRVRDFADVKNNGTIDGGIADAALSMLDVDAQGLDVMDRKFLEAVLHKFGGGPVGLDNVAAAIGESTDTIEDVIEPYLIQQGFLQRTPRGRMATERAYLHFGLPVEK.

The large ATPase domain (RuvB-L) stretch occupies residues 4-193; it reads TDNLTAAQPQ…FGIVSRLEFY (190 aa). ATP is bound by residues leucine 32, arginine 33, glycine 74, lysine 77, threonine 78, threonine 79, 140–142, arginine 183, tyrosine 193, and arginine 230; that span reads EDY. Residue threonine 78 participates in Mg(2+) binding. Residues 194 to 264 are small ATPAse domain (RuvB-S); the sequence is ENRDLTTIVS…IADAALSMLD (71 aa). The tract at residues 267 to 343 is head domain (RuvB-H); sequence AQGLDVMDRK…YLHFGLPVEK (77 aa). DNA contacts are provided by arginine 322 and arginine 327.

The protein belongs to the RuvB family. As to quaternary structure, homohexamer. Forms an RuvA(8)-RuvB(12)-Holliday junction (HJ) complex. HJ DNA is sandwiched between 2 RuvA tetramers; dsDNA enters through RuvA and exits via RuvB. An RuvB hexamer assembles on each DNA strand where it exits the tetramer. Each RuvB hexamer is contacted by two RuvA subunits (via domain III) on 2 adjacent RuvB subunits; this complex drives branch migration. In the full resolvosome a probable DNA-RuvA(4)-RuvB(12)-RuvC(2) complex forms which resolves the HJ.

It localises to the cytoplasm. It catalyses the reaction ATP + H2O = ADP + phosphate + H(+). In terms of biological role, the RuvA-RuvB-RuvC complex processes Holliday junction (HJ) DNA during genetic recombination and DNA repair, while the RuvA-RuvB complex plays an important role in the rescue of blocked DNA replication forks via replication fork reversal (RFR). RuvA specifically binds to HJ cruciform DNA, conferring on it an open structure. The RuvB hexamer acts as an ATP-dependent pump, pulling dsDNA into and through the RuvAB complex. RuvB forms 2 homohexamers on either side of HJ DNA bound by 1 or 2 RuvA tetramers; 4 subunits per hexamer contact DNA at a time. Coordinated motions by a converter formed by DNA-disengaged RuvB subunits stimulates ATP hydrolysis and nucleotide exchange. Immobilization of the converter enables RuvB to convert the ATP-contained energy into a lever motion, pulling 2 nucleotides of DNA out of the RuvA tetramer per ATP hydrolyzed, thus driving DNA branch migration. The RuvB motors rotate together with the DNA substrate, which together with the progressing nucleotide cycle form the mechanistic basis for DNA recombination by continuous HJ branch migration. Branch migration allows RuvC to scan DNA until it finds its consensus sequence, where it cleaves and resolves cruciform DNA. This Neisseria meningitidis serogroup C (strain 053442) protein is Holliday junction branch migration complex subunit RuvB.